The sequence spans 431 residues: Keratin, type I cytoskeletal 20 (431 aa).

A disordered region spans residues 1-23; the sequence is MDFSRQSFHRSLSSSSQGPALSM. The segment at 1 to 76 is head; the sequence is MDFSRQSFHR…SNGSDLFGGN (76 aa). Serine 13 carries the phosphoserine; by MAPKAPK2, MAPKAPK3 and PKC modification. Phosphoserine occurs at positions 16 and 26. Residues 77–112 are coil 1A; the sequence is GKLAMQNLNDRLANYLEKVRSLEQSNSRLEAQIKQW. The 312-residue stretch at 77-388 folds into the IF rod domain; the sequence is GKLAMQNLND…RLLEGEDIKT (312 aa). Positions 113–130 are linker 1; sequence YETNAPSTIRDYSSYYAQ. A coil 1B region spans residues 131–222; it reads IKELQNQVKD…KEHQEEVEVL (92 aa). The tract at residues 223–245 is linker 12; it reads RRQLGNNVNVEVDAAPGLNLGEI. Residues 246-384 form a coil 2 region; sequence MNEMRQRYEV…ATYRRLLEGE (139 aa). The tail stretch occupies residues 385–431; sequence DIKTTEYQLSTLEMKDIKKTRKIKTVVEEVVDGKVVSSEVKEIEESV.

This sequence belongs to the intermediate filament family. In terms of assembly, heterotetramer of two type I and two type II keratins. Associates with KRT8. Hyperphosphorylation at Ser-13 occurs during the early stages of apoptosis but becomes less prominent during the later stages. Phosphorylation at Ser-13 also increases in response to stress brought on by cell injury. Post-translationally, proteolytically cleaved by caspases during apoptosis. Cleavage occurs at Asp-235. Expressed at low levels in the more differentiated suprabasal regions of the small intestine, and at higher levels in the colon, mainly in the upper region and in scattered cells throughout the remaining epithelium. Also expressed in epithelial cells of bladder, ileum and stomach and at lower levels in pancreas and earskin. The phosphorylated form is nearly exclusively expressed in goblet cells of the small intestine and in the lumen-proximal cells of the colon (at protein level). Also expressed in jejunum and duodenum.

In terms of biological role, plays a significant role in maintaining keratin filament organization in intestinal epithelia. When phosphorylated, plays a role in the secretion of mucin in the small intestine. This is Keratin, type I cytoskeletal 20 from Mus musculus (Mouse).